The chain runs to 246 residues: Proteasome subunit alpha (246 aa).

This sequence belongs to the peptidase T1A family. The 20S proteasome core is composed of 14 alpha and 14 beta subunits that assemble into four stacked heptameric rings, resulting in a barrel-shaped structure. The two inner rings, each composed of seven catalytic beta subunits, are sandwiched by two outer rings, each composed of seven alpha subunits. The catalytic chamber with the active sites is on the inside of the barrel. Has probably a gated structure, the ends of the cylinder being occluded by the N-termini of the alpha-subunits. Is likely capped at one or both ends by the proteasome regulatory ATPase, PAN.

The protein resides in the cytoplasm. Its activity is regulated as follows. The formation of the proteasomal ATPase PAN-20S proteasome complex, via the docking of the C-termini of PAN into the intersubunit pockets in the alpha-rings, triggers opening of the gate for substrate entry. Interconversion between the open-gate and close-gate conformations leads to a dynamic regulation of the 20S proteasome proteolysis activity. Its function is as follows. Component of the proteasome core, a large protease complex with broad specificity involved in protein degradation. This chain is Proteasome subunit alpha, found in Archaeoglobus fulgidus (strain ATCC 49558 / DSM 4304 / JCM 9628 / NBRC 100126 / VC-16).